The following is a 217-amino-acid chain: Small ribosomal subunit protein uS3 (217 aa).

The KH type-2 domain maps to 24–93 (IKEFLEYKLS…NPQIDVIDVS (70 aa)).

The protein belongs to the universal ribosomal protein uS3 family. In terms of assembly, part of the 30S ribosomal subunit.

In terms of biological role, binds the lower part of the 30S subunit head. This is Small ribosomal subunit protein uS3 from Pyrobaculum islandicum (strain DSM 4184 / JCM 9189 / GEO3).